We begin with the raw amino-acid sequence, 228 residues long: tRNA (guanine-N(1)-)-methyltransferase (228 aa).

Residues Gly108 and Val127–Leu132 contribute to the S-adenosyl-L-methionine site.

The protein belongs to the RNA methyltransferase TrmD family. Homodimer.

It localises to the cytoplasm. The catalysed reaction is guanosine(37) in tRNA + S-adenosyl-L-methionine = N(1)-methylguanosine(37) in tRNA + S-adenosyl-L-homocysteine + H(+). Specifically methylates guanosine-37 in various tRNAs. The polypeptide is tRNA (guanine-N(1)-)-methyltransferase (Metamycoplasma arthritidis (strain 158L3-1) (Mycoplasma arthritidis)).